Consider the following 92-residue polypeptide: Costars family protein ST45-2 (92 aa).

Methionine 1 carries the N-acetylmethionine modification.

Belongs to the costars family.

This Eutrema halophilum (Salt cress) protein is Costars family protein ST45-2.